Consider the following 89-residue polypeptide: Peroxidase (89 aa).

Position 52 (histidine 52) interacts with heme. Threonine 53 and aspartate 68 together coordinate Ca(2+).

It depends on heme b as a cofactor. Requires Ca(2+) as cofactor.

Its subcellular location is the secreted. It catalyses the reaction 2 a phenolic donor + H2O2 = 2 a phenolic radical donor + 2 H2O. In terms of biological role, removal of H(2)O(2), oxidation of toxic reductants, biosynthesis and degradation of lignin, suberization, auxin catabolism, response to environmental stresses such as wounding, pathogen attack and oxidative stress. These functions might be dependent on each isozyme/isoform in each plant tissue. Active against p-coumaryl alcohol, coniferyl alcohol and coniferyl aldehyde. This chain is Peroxidase, found in Ginkgo biloba (Ginkgo).